Consider the following 831-residue polypeptide: MIPLDPAQRAAELRRRLQEANYHYHVLDQPRIPDADYDRMLRELDALEATYPDLATPDSPTQRVGHTIATAFSEVRHTVPMLSLNNAFSDPEVLEFVRRITARLGETAPSFSAEPKLDGLAISLRYQNGIFIQGATRGDGVTGEDVTANLRTLPTIPQRLQSDTWPTVLEVRGEVYMPRPDFEAYNTQARLRGWKVLANPRNGAAGSLRQLDPHITAQRPLSFYAYGIGEVADDVSFHSHSEILASLRAWGFPVSPLVELVYGSEGLLNYYRRMETIRDTLPFDIDGIVYKLDDLSGQHEMGFVARAPRWAIAHKFPAQEQTTTVEAIEIQIGRTGAATPVARLTPVQVAGVTVTSATLHNADQIARLDVRIGDTVIVRRAGDVIPEVVAVITDSRPPGVTAWSMPMACPVCGSEIVRETGAAVWRCSGELACPAQRKEAIRHFVSRRAMDVEGLGVKCIELLVDAAVVHGVADLYHLSLDQLLRLRLVTNAQTPTMLLREARDHVTGMRYQQLEEILRTVGVDLSGEGDVPEHWQIDVLRAQWPDFDWNHKKIATKWAQNLIAAIDRSRQTTLERFLFALGMTHVGETTAKALAHSFGDLAIIRQLPWPLFKCVPDIGGEVARAIGHFMDQPANQQAIDDLVERGVRITDAHPPTSTLRDQLTLASLLEHLEIPKITPMRAVQLATLAPTLPLLAEADLDALLQAGVPQPAAQSLTEWFQSPDNISLARRLQHCCDVLLAQLPSPDRAHTAPLNGQSVVLTGKLASLTREAAATRLEMLGAKIVGSVSKKTSFLVAGEDPGSKLDKAHALHVDIWDEARLLDFLEQYSAQ.

Residues 34–38 (DADYD), 83–84 (SL), and E114 each bind NAD(+). The active-site N6-AMP-lysine intermediate is the K116. 4 residues coordinate NAD(+): R137, E174, K291, and K315. Residues C409, C412, C427, and C433 each coordinate Zn(2+). Residues 749 to 831 (AHTAPLNGQS…LDFLEQYSAQ (83 aa)) form the BRCT domain.

It belongs to the NAD-dependent DNA ligase family. LigA subfamily. Mg(2+) serves as cofactor. Mn(2+) is required as a cofactor.

The enzyme catalyses NAD(+) + (deoxyribonucleotide)n-3'-hydroxyl + 5'-phospho-(deoxyribonucleotide)m = (deoxyribonucleotide)n+m + AMP + beta-nicotinamide D-nucleotide.. Functionally, DNA ligase that catalyzes the formation of phosphodiester linkages between 5'-phosphoryl and 3'-hydroxyl groups in double-stranded DNA using NAD as a coenzyme and as the energy source for the reaction. It is essential for DNA replication and repair of damaged DNA. The chain is DNA ligase from Xylella fastidiosa (strain M12).